A 248-amino-acid chain; its full sequence is Meiotically up-regulated gene 110 protein (248 aa).

The chain crosses the membrane as a helical span at residues 23 to 43 (LRFVFWFSVLIPIFFIALIII).

It localises to the membrane. In terms of biological role, has a role in meiosis. In Schizosaccharomyces pombe (strain 972 / ATCC 24843) (Fission yeast), this protein is Meiotically up-regulated gene 110 protein (mug110).